The primary structure comprises 575 residues: Transcription factor E3 (575 aa).

Serine 47 is modified (phosphoserine; by MTOR). Residues 90–126 (ATLSASSSAGGSRTPAMSSSSSSRVLLRQQLMRAQAQ) are compositionally biased toward low complexity. The disordered stretch occupies residues 90 to 153 (ATLSASSSAG…SPAPASPAIS (64 aa)). Positions 127 to 136 (EQERRERREQ) are enriched in basic and acidic residues. Arginine 188 bears the Asymmetric dimethylarginine mark. Positions 211 to 246 (LASQALTPPPGPASAQPLPAPEAAHTTGPTGSAPNS) are disordered. The interval 260–271 (EIDDVIDEIISL) is strong transcription activation domain. Phosphoserine; by MTOR is present on serine 321. A Glycyl lysine isopeptide (Lys-Gly) (interchain with G-Cter in SUMO2) cross-link involves residue lysine 339. The 54-residue stretch at 346-399 (QKKDNHNLIERRRRFNINDRIKELGTLIPKSSDPEMRWNKGTILKASVDYIRKL) folds into the bHLH domain. The Nuclear localization signal motif lies at 356-359 (RRRR). Positions 409 to 430 (LESRQRSLEQANRSLQLRIQEL) are leucine-zipper. 2 disordered regions span residues 473 to 498 (GAAT…PPSD) and 534 to 575 (GGLS…EEES). Residues 539–575 (GALSPLRAASDPLLSSVSPAVSKASSRRSSFSMEEES) are compositionally biased toward low complexity. Serine 542, serine 548, serine 554, serine 556, serine 560, and serine 568 each carry phosphoserine.

This sequence belongs to the MiT/TFE family. Homodimer and heterodimer; with TFEB or MITF. Interacts with RRAGC/RagC GDP-bound and RRAGD/RagD GDP-bound; promoting its recruitment to lysosomal membrane in the presence of nutrients. Interacts with TSC22D1; the interaction is enhanced in the presence of TGF-beta. Post-translationally, sumoylated; does not affect dimerization with MITF. In terms of processing, phosphorylation ar Ser-47 and Ser-321 by MTOR via non-canonical mTORC1 pathway regulates its stability and subcellular location, respectively. When nutrients are present, phosphorylation by MTOR at Ser-47 promotes ubiquitination by the SCF(BTRC) complex, followed by degradation. When nutrients are present, phosphorylation by MTOR at Ser-321 also promotes association with 14-3-3/YWHA adapters and retention in the cytosol. Phosphorylation at Ser-47 plays a more critical role than phosphorylation at Ser-321 for TFE3 inactivation. Inhibition of mTORC1, starvation and lysosomal disruption, promotes dephosphorylation and transcription factor activity. Ubiquitinated by the SCF(BTRC) and SCF(FBXW11) complexes following phosphorylation at Ser-47 by MTOR, leading to its degradation by the proteasome. In terms of tissue distribution, ubiquitous in fetal and adult tissues.

The protein localises to the cytoplasm. It is found in the cytosol. Its subcellular location is the nucleus. It localises to the lysosome membrane. Its function is as follows. Transcription factor that acts as a master regulator of lysosomal biogenesis and immune response. Specifically recognizes and binds E-box sequences (5'-CANNTG-3'); efficient DNA-binding requires dimerization with itself or with another MiT/TFE family member such as TFEB or MITF. Involved in the cellular response to amino acid availability by acting downstream of MTOR: in the presence of nutrients, TFE3 phosphorylation by MTOR promotes its inactivation. Upon starvation or lysosomal stress, inhibition of MTOR induces TFE3 dephosphorylation, resulting in transcription factor activity. Specifically recognizes and binds the CLEAR-box sequence (5'-GTCACGTGAC-3') present in the regulatory region of many lysosomal genes, leading to activate their expression, thereby playing a central role in expression of lysosomal genes. Maintains the pluripotent state of embryonic stem cells by promoting the expression of genes such as ESRRB; mTOR-dependent TFE3 cytosolic retention and inactivation promotes exit from pluripotency. Required to maintain the naive pluripotent state of hematopoietic stem cell; mTOR-dependent cytoplasmic retention of TFE3 promotes the exit of hematopoietic stem cell from pluripotency. TFE3 activity is also involved in the inhibition of neuronal progenitor differentiation. Acts as a positive regulator of browning of adipose tissue by promoting expression of target genes; mTOR-dependent phosphorylation promotes cytoplasmic retention of TFE3 and inhibits browning of adipose tissue. In association with TFEB, activates the expression of CD40L in T-cells, thereby playing a role in T-cell-dependent antibody responses in activated CD4(+) T-cells and thymus-dependent humoral immunity. Specifically recognizes the MUE3 box, a subset of E-boxes, present in the immunoglobulin enhancer. It also binds very well to a USF/MLTF site. Promotes TGF-beta-induced transcription of COL1A2; via its interaction with TSC22D1 at E-boxes in the gene proximal promoter. May regulate lysosomal positioning in response to nutrient deprivation by promoting the expression of PIP4P1. In Homo sapiens (Human), this protein is Transcription factor E3.